A 180-amino-acid polypeptide reads, in one-letter code: Thioredoxin 3 (180 aa).

Residues 1–3 (MAL) are Cytoplasmic-facing. A helical; Signal-anchor for type II membrane protein transmembrane segment spans residues 4 to 24 (ICIGSVCFSLFHIGVIILLII). Topologically, residues 25–180 (NYFSSHIKKI…FQKYCLEKAK (156 aa)) are lumenal. Residues 29-176 (SHIKKIFPSF…IEKAFQKYCL (148 aa)) form the Thioredoxin domain. Residues Cys-99 and Cys-102 each act as nucleophile in the active site. Cys-99 and Cys-102 are oxidised to a cystine.

This sequence belongs to the thioredoxin family. The disulfide bond between Cys-99 and Cys-102 acts as a redox-active center and is reduced by thioredoxin reductase TRXR.

It localises to the endoplasmic reticulum membrane. Its function is as follows. Participates in various redox reactions through the reversible oxidation of its active center dithiol to a disulfide and catalyzes dithiol-disulfide exchange reactions. This chain is Thioredoxin 3, found in Plasmodium falciparum (isolate 3D7).